We begin with the raw amino-acid sequence, 582 residues long: Hemagglutinin-neuraminidase (582 aa).

Topologically, residues 1-34 (MEPSKLFTMSDNATFAPGPVVNAADKKTFRTCFR) are intravirion. Residues 35 to 55 (ILVLSVQAVTLILVIVTLGEL) form a helical membrane-spanning segment. Over 56–582 (VRMINDQGLS…LPVLTRLTIT (527 aa)) the chain is Virion surface. 3 disulfide bridges follow: Cys178/Cys202, Cys192/Cys253, and Cys244/Cys257. Residues Asn284 and Asn329 are each glycosylated (N-linked (GlcNAc...) asparagine; by host). 3 cysteine pairs are disulfide-bonded: Cys350–Cys471, Cys382–Cys392, and Cys465–Cys475. Asn400 and Asn448 each carry an N-linked (GlcNAc...) asparagine; by host glycan. Asn507 carries an N-linked (GlcNAc...) asparagine; by host glycan. Cys545 and Cys556 are disulfide-bonded.

Belongs to the paramyxoviruses hemagglutinin-neuraminidase family. As to quaternary structure, homotetramer; composed of disulfide-linked homodimers. Interacts with F protein trimer.

Its subcellular location is the virion membrane. It is found in the host cell membrane. It catalyses the reaction Hydrolysis of alpha-(2-&gt;3)-, alpha-(2-&gt;6)-, alpha-(2-&gt;8)- glycosidic linkages of terminal sialic acid residues in oligosaccharides, glycoproteins, glycolipids, colominic acid and synthetic substrates.. Functionally, attaches the virus to alpha-2,3-linked sialic acid-containing cell receptors and thereby initiating infection. Binding of HN protein to the receptor induces a conformational change that allows the F protein to trigger virion/cell membranes fusion. Binds to the glycan motifs sialyl Lewis (SLe) and GM2 ganglioside (GM2-glycan). In terms of biological role, neuraminidase activity ensures the efficient spread of the virus by dissociating the mature virions from the neuraminic acid containing glycoproteins. The polypeptide is Hemagglutinin-neuraminidase (Mumps orthorubulavirus (MuV)).